We begin with the raw amino-acid sequence, 379 residues long: MKEIWETLKQYFGDGFVPGSAPLRYEMHFCDMKEPLNKKQSMRYGVEIPEDAMPLFSVLGDTCAPPCSCQDISGVIEHIDRYLENAPIRHADDYTITSGKDDEDINQVSLYIMRDTLSWWVHWGGSLHPNNYWKLIYVAFAAIPDDVQVHPRDFIDGTYRFLGHSWNDCLNGLLAEGVPSDQVKLAEMTLWRQMATQYIEKVDPGLRSLLVSKTTLMTQYRVMTANTLGCAVLLLASEGVIVGDLDDGALEMASIAQCLSMDMAKEALGVLEGEKTETVAGDRRQLKRELRWLYVRCMKYLDAQPHAEFLRRFASSGLHYVPMMDRYLERVRGHIRFPIRESVARILEPFIKREPTPNKSGREADHIAQVVNEPITVAL.

This sequence belongs to the terpene synthase family. Alpha-humulene synthase eupE subfamily. It depends on Mg(2+) as a cofactor.

The catalysed reaction is (2E,6E)-farnesyl diphosphate = alpha-humulene + diphosphate. Its pathway is secondary metabolite biosynthesis; terpenoid biosynthesis. Functionally, alpha-humulene synthase; part of the gene cluster that mediates the biosynthesis of eupenifeldin, a bistropolone meroterpenoid that acts as an antitumor agent. The first step of eupenifeldin biosynthesis is the biosynthesis of 3-methylorcinaldehyde performed by the non-reducing polyketide synthase eupA. Oxidative dearomatization of 3-methylorcinaldehyde likely catalyzed by the FAD-dependent monooxygenase eupB is followed by oxidative ring expansion by the 2-oxoglutarate-dependent dioxygenase eupC to provide the first tropolone metabolite, tropolone stipitaldehyde. In parallel, generation of sesquiterpene alpha-humulene from farnesylpyrophosphate (FPP) is catalyzed by the terpene cyclase eupE. The cytochrome P450 monooxygenase eupD then hydroxylates humulene to humulenol. The putative Diels-Alderase eupF probably catalyzes the formation of the tropolone-humulene skeleton by linking humulenol and the polyketide moiety. The short-chain dehydrogenase/reductase eupG and the flavin-dependent monooxygenase eupH are also essential for eupenifeldin biosynthesis and are likely the additional decorating enzymes of the tropolone-humulene skeleton to produce final eupenifeldin or derivatives. In Phoma sp, this protein is Alpha-humulene synthase eupE.